Consider the following 358-residue polypeptide: Carbamoyl phosphate synthase small chain (358 aa).

CPSase regions lie at residues 1-168 (MYNR…PALG) and 1-171 (MYNR…GRGR). The L-glutamine site is built by Ser-46, Gly-220, and Gly-222. A Glutamine amidotransferase type-1 domain is found at 172-358 (RVVLVDLGMK…FIKNIDNNMK (187 aa)). Cys-247 functions as the Nucleophile in the catalytic mechanism. Residues Met-248, Gln-251, Asn-289, Gly-291, and Tyr-292 each coordinate L-glutamine. Residues His-332 and Glu-334 contribute to the active site.

It belongs to the CarA family. In terms of assembly, composed of two chains; the small (or glutamine) chain promotes the hydrolysis of glutamine to ammonia, which is used by the large (or ammonia) chain to synthesize carbamoyl phosphate. Tetramer of heterodimers (alpha,beta)4.

It catalyses the reaction hydrogencarbonate + L-glutamine + 2 ATP + H2O = carbamoyl phosphate + L-glutamate + 2 ADP + phosphate + 2 H(+). The enzyme catalyses L-glutamine + H2O = L-glutamate + NH4(+). Its pathway is amino-acid biosynthesis; L-arginine biosynthesis; carbamoyl phosphate from bicarbonate: step 1/1. The protein operates within pyrimidine metabolism; UMP biosynthesis via de novo pathway; (S)-dihydroorotate from bicarbonate: step 1/3. Its function is as follows. Small subunit of the glutamine-dependent carbamoyl phosphate synthetase (CPSase). CPSase catalyzes the formation of carbamoyl phosphate from the ammonia moiety of glutamine, carbonate, and phosphate donated by ATP, constituting the first step of 2 biosynthetic pathways, one leading to arginine and/or urea and the other to pyrimidine nucleotides. The small subunit (glutamine amidotransferase) binds and cleaves glutamine to supply the large subunit with the substrate ammonia. The polypeptide is Carbamoyl phosphate synthase small chain (Fusobacterium nucleatum subsp. nucleatum (strain ATCC 25586 / DSM 15643 / BCRC 10681 / CIP 101130 / JCM 8532 / KCTC 2640 / LMG 13131 / VPI 4355)).